The sequence spans 339 residues: MASPNPAQSTTILFRRLTWQSAVTISIRLADGEPGAGNACDRYYIKAPRYSYLPLFIPEIRENLVELALDDAQLEQIDEKNWWFEEEVSEEDKQRFVRQGACRWHWPIDLVDIHSFISRPQPLPSSIELSSTPRVISLLLHLSNPPQDRLLMPNSIEVCKSQWLNQVKEADFVRWRNTNRVTNLRRVDLEAGWDGIVNNDFDLYAQMVNKIVPLPLLTSSNSTQPSRPSSADPSGPPRAPDSSYATRAIPFKIYLPDNAPVIQEIVPPISESGKPTTLLAVLQVHLPLLFPISSENPYELAFPIAQGILIPQEAEVAWIASCLCGVDGWVRVGVCLSAA.

Lys168 participates in a covalent cross-link: Glycyl lysine isopeptide (Lys-Gly) (interchain with G-Cter in ATG12). Residues 219-230 (SSNSTQPSRPSS) are compositionally biased toward low complexity. A disordered region spans residues 219–241 (SSNSTQPSRPSSADPSGPPRAPD).

The protein belongs to the ATG5 family. In terms of assembly, conjugated with ATG12. Post-translationally, conjugated to ATG12; which is essential for autophagy.

It is found in the preautophagosomal structure membrane. In terms of biological role, involved in cytoplasm to vacuole transport (Cvt) and autophagic vesicle formation. Autophagy is essential for maintenance of amino acid levels and protein synthesis under nitrogen starvation. Required for selective autophagic degradation of the nucleus (nucleophagy). Also required for mitophagy, which eliminates defective or superfluous mitochondria in order to fulfill cellular energy requirements and prevent excess ROS production. Conjugation with ATG12, through a ubiquitin-like conjugating system involving ATG7 as an E1-like activating enzyme and ATG10 as an E2-like conjugating enzyme, is essential for its function. The ATG12-ATG5 conjugate acts as an E3-like enzyme which is required for lipidation of ATG8 and ATG8 association to the vesicle membranes. This chain is Autophagy protein 5 (ATG5), found in Cryptococcus neoformans var. neoformans serotype D (strain B-3501A) (Filobasidiella neoformans).